A 266-amino-acid polypeptide reads, in one-letter code: Dihydropteroate synthase (266 aa).

In terms of domain architecture, Pterin-binding spans 12–260; sequence AAIMGILNVT…DVKANQDIVA (249 aa). Asn19 serves as a coordination point for Mg(2+). (7,8-dihydropterin-6-yl)methyl diphosphate-binding positions include Thr59, Asp93, Asn112, Asp176, Lys212, and 248–250; that span reads RVH.

It belongs to the DHPS family. As to quaternary structure, homodimer or homotrimer. Mg(2+) is required as a cofactor.

It carries out the reaction (7,8-dihydropterin-6-yl)methyl diphosphate + 4-aminobenzoate = 7,8-dihydropteroate + diphosphate. It functions in the pathway cofactor biosynthesis; tetrahydrofolate biosynthesis; 7,8-dihydrofolate from 2-amino-4-hydroxy-6-hydroxymethyl-7,8-dihydropteridine diphosphate and 4-aminobenzoate: step 1/2. Functionally, catalyzes the condensation of para-aminobenzoate (pABA) with 6-hydroxymethyl-7,8-dihydropterin diphosphate (DHPt-PP) to form 7,8-dihydropteroate (H2Pte), the immediate precursor of folate derivatives. This chain is Dihydropteroate synthase (folP), found in Streptococcus pyogenes serotype M18 (strain MGAS8232).